The chain runs to 315 residues: Replication factor C small subunit (315 aa).

ATP is bound at residue 43 to 50 (GSPGVGKT).

The protein belongs to the activator 1 small subunits family. RfcS subfamily. In terms of assembly, heteromultimer composed of small subunits (RfcS) and large subunits (RfcL).

In terms of biological role, part of the RFC clamp loader complex which loads the PCNA sliding clamp onto DNA. This chain is Replication factor C small subunit, found in Methanococcus maripaludis (strain C7 / ATCC BAA-1331).